Reading from the N-terminus, the 191-residue chain is Protein GrpE (191 aa).

The segment covering 1–10 (MNHEEQKVET) has biased composition (basic and acidic residues). Residues 1–28 (MNHEEQKVETMEQVEAQPVEPTDVDSEV) form a disordered region.

The protein belongs to the GrpE family. Homodimer.

Its subcellular location is the cytoplasm. Its function is as follows. Participates actively in the response to hyperosmotic and heat shock by preventing the aggregation of stress-denatured proteins, in association with DnaK and GrpE. It is the nucleotide exchange factor for DnaK and may function as a thermosensor. Unfolded proteins bind initially to DnaJ; upon interaction with the DnaJ-bound protein, DnaK hydrolyzes its bound ATP, resulting in the formation of a stable complex. GrpE releases ADP from DnaK; ATP binding to DnaK triggers the release of the substrate protein, thus completing the reaction cycle. Several rounds of ATP-dependent interactions between DnaJ, DnaK and GrpE are required for fully efficient folding. The polypeptide is Protein GrpE (Aeromonas salmonicida (strain A449)).